The chain runs to 355 residues: Uroporphyrinogen decarboxylase (355 aa).

Substrate is bound by residues 27 to 31 (RQAGR), Asp-78, Tyr-155, Ser-210, and His-328.

This sequence belongs to the uroporphyrinogen decarboxylase family. In terms of assembly, homodimer.

It localises to the cytoplasm. It carries out the reaction uroporphyrinogen III + 4 H(+) = coproporphyrinogen III + 4 CO2. The protein operates within porphyrin-containing compound metabolism; protoporphyrin-IX biosynthesis; coproporphyrinogen-III from 5-aminolevulinate: step 4/4. Its function is as follows. Catalyzes the decarboxylation of four acetate groups of uroporphyrinogen-III to yield coproporphyrinogen-III. The protein is Uroporphyrinogen decarboxylase of Pseudomonas aeruginosa (strain UCBPP-PA14).